We begin with the raw amino-acid sequence, 318 residues long: NADH-ubiquinone oxidoreductase chain 1 (318 aa).

8 helical membrane-spanning segments follow: residues proline 2–leucine 22, alanine 69–leucine 89, leucine 100–glycine 120, alanine 147–threonine 167, histidine 171–alanine 191, leucine 222–phenylalanine 242, glutamate 253–isoleucine 273, and leucine 294–isoleucine 314.

It belongs to the complex I subunit 1 family. In terms of assembly, core subunit of respiratory chain NADH dehydrogenase (Complex I) which is composed of 45 different subunits.

It is found in the mitochondrion inner membrane. The catalysed reaction is a ubiquinone + NADH + 5 H(+)(in) = a ubiquinol + NAD(+) + 4 H(+)(out). Core subunit of the mitochondrial membrane respiratory chain NADH dehydrogenase (Complex I) which catalyzes electron transfer from NADH through the respiratory chain, using ubiquinone as an electron acceptor. Essential for the catalytic activity and assembly of complex I. The chain is NADH-ubiquinone oxidoreductase chain 1 (MT-ND1) from Hylobates lar (Lar gibbon).